Here is a 134-residue protein sequence, read N- to C-terminus: Putative cytochrome c oxidase subunit 6b-like (134 aa).

Residues 1 to 61 form a disordered region; the sequence is MSSAQMDPHD…DSGRETDAAV (61 aa). Composition is skewed to basic and acidic residues over residues 7–19 and 44–61; these read DPHDKMRSRDISK and ATFRAKRGDSGRETDAAV. One can recognise a CHCH domain in the interval 71–114; that stretch reads TRHCFNRFMQYHKCIEKNGRDANDCNNLRDYVRSICPEELVSKI. Positions 74–84 match the Cx9C motif motif; sequence CFNRFMQYHKC. 2 cysteine pairs are disulfide-bonded: Cys74/Cys106 and Cys84/Cys95. A Cx10C motif motif is present at residues 95–106; that stretch reads CNNLRDYVRSIC.

The protein belongs to the cytochrome c oxidase subunit 6B (TC 3.D.4.8) family.

The protein localises to the mitochondrion. This protein is one of the nuclear-coded polypeptide chains of cytochrome c oxidase, the terminal oxidase in mitochondrial electron transport. This protein may be one of the heme-binding subunits of the oxidase. The polypeptide is Putative cytochrome c oxidase subunit 6b-like (Arabidopsis thaliana (Mouse-ear cress)).